The primary structure comprises 953 residues: Zinc finger protein 507 (953 aa).

Serine 95 carries the phosphoserine modification. 3 consecutive C2H2-type zinc fingers follow at residues tyrosine 125–histidine 147, leucine 155–histidine 185, and tyrosine 248–histidine 270. Serine 427 carries the post-translational modification Phosphoserine. Residues lysine 470 to serine 489 form a disordered region. C2H2-type zinc fingers lie at residues tyrosine 641 to histidine 663, tyrosine 669 to histidine 691, tyrosine 697 to histidine 720, tyrosine 758 to histidine 780, and tyrosine 786 to histidine 808. The tract at residues glycine 831–asparagine 888 is disordered. Polar residues predominate over residues threonine 854–asparagine 888. The C2H2-type 9 zinc-finger motif lies at phenylalanine 911–histidine 933.

Belongs to the krueppel C2H2-type zinc-finger protein family.

It localises to the nucleus. May be involved in transcriptional regulation. This chain is Zinc finger protein 507 (ZNF507), found in Homo sapiens (Human).